A 343-amino-acid polypeptide reads, in one-letter code: MFGFGHHHNQAPAAPSDPNQIFKIFCRANENYCLTVRDSAVVLAPVNPKDEHQHWFKDMRFSTKVKDGEGMPAFALVNKATGLAVKHSLGQSHPVKLVPFNPEYEDASVLWTESKDVGKGFRCIRMVNNTRLNLDAFHGDKDHGGVRDGTTVVLWEWCKGDNQSWKILPWGPEAHSSSPGAATACTIGGVPVHTVRVFSAAGEDYCLTVRNGTACLAPKNPRDDYQHWIKDMRHSNKIRDEEGYPAFALVNKVTGEAIKHSTGQGHPVKLVPYNPEYQDESVLWTESKDVGKGFRCIRMVNNIYLNFDAFHGDKDHGGIHDGTEIVLWKWCEGDNQRWKILPW.

The Ricin B-type lectin domain occupies 194–340 (TVRVFSAAGE…CEGDNQRWKI (147 aa)).

Functionally, lectin which binds carbohydrates in vitro. Interacts through its lectin domain with glycan structures containing specific motifs. This Oryza sativa subsp. japonica (Rice) protein is Ricin B-like lectin R40G2.